Consider the following 20-residue polypeptide: 44 kDa cell wall protein 2 (20 aa).

It localises to the secreted. Its subcellular location is the cell wall. The polypeptide is 44 kDa cell wall protein 2 (Solanum lycopersicum (Tomato)).